We begin with the raw amino-acid sequence, 223 residues long: Small heat shock protein hspI, mitochondrial (223 aa).

The N-terminal 23 residues, 1 to 23 (MYKLSKTTPFFFRRAFLCGRRGG), are a transit peptide targeting the mitochondrion. Residues 109-223 (KTRGFRSPKT…YVKSTTINVQ (115 aa)) enclose the sHSP domain.

This sequence belongs to the small heat shock protein (HSP20) family.

It is found in the mitochondrion. The protein is Small heat shock protein hspI, mitochondrial (hspI) of Dictyostelium discoideum (Social amoeba).